The sequence spans 142 residues: Lysozyme 2 (142 aa).

Positions 1–20 (MLKLTLTILAAVLLVTPAFG) are cleaved as a signal peptide. Residues 21–142 (KVYTRCSLAR…HTLPSIDDCF (122 aa)) form the C-type lysozyme domain. Cystine bridges form between C26/C141, C47/C131, C82/C98, and C94/C112. The active site involves E52. N-linked (GlcNAc...) asparagine glycosylation is present at N66. D70 is an active-site residue.

Belongs to the glycosyl hydrolase 22 family. Expressed only in the midgut where it is concentrated around the middle in all larval stages.

The protein localises to the secreted. The enzyme catalyses Hydrolysis of (1-&gt;4)-beta-linkages between N-acetylmuramic acid and N-acetyl-D-glucosamine residues in a peptidoglycan and between N-acetyl-D-glucosamine residues in chitodextrins.. Lysozymes have primarily a bacteriolytic function. Shows antibacterial activity against Gram-positive bacterium M.luteus but shows no activity against Gram-negative bacterium E.coli. Likely to play a role in the eradication of ingested pathogens during their passage through the intestine. The chain is Lysozyme 2 from Lucilia sericata (Green bottle fly).